The primary structure comprises 368 residues: tRNA-specific 2-thiouridylase MnmA (368 aa).

ATP contacts are provided by residues 11–18 and Met-37; that span reads GMSGGVDS. Residues 97–99 are interaction with target base in tRNA; it reads NPD. Cys-102 serves as the catalytic Nucleophile. Cys-102 and Cys-199 are joined by a disulfide. Gly-127 provides a ligand contact to ATP. The interval 149 to 151 is interaction with tRNA; it reads KDQ. Cys-199 functions as the Cysteine persulfide intermediate in the catalytic mechanism. Positions 311–312 are interaction with tRNA; sequence RY.

The protein belongs to the MnmA/TRMU family. As to quaternary structure, interacts with TusE.

Its subcellular location is the cytoplasm. The enzyme catalyses S-sulfanyl-L-cysteinyl-[protein] + uridine(34) in tRNA + AH2 + ATP = 2-thiouridine(34) in tRNA + L-cysteinyl-[protein] + A + AMP + diphosphate + H(+). In terms of biological role, catalyzes the 2-thiolation of uridine at the wobble position (U34) of tRNA(Lys), tRNA(Glu) and tRNA(Gln), leading to the formation of s(2)U34, the first step of tRNA-mnm(5)s(2)U34 synthesis. Sulfur is provided by IscS, via a sulfur-relay system. Binds ATP and its substrate tRNAs. The polypeptide is tRNA-specific 2-thiouridylase MnmA (Shigella dysenteriae serotype 1 (strain Sd197)).